The primary structure comprises 117 residues: Gamma-aminobutyric acid receptor-associated protein-like 3 (117 aa).

Positions 1 to 22 (MKFQYKEVHPFEYRKKEGEKIR) are interaction with beta-tubulin. The segment at 36-68 (APKARVPDLDRRKYLVPSDLTDGQFYLLIRKRI) is interaction with GABRG2. Glycine 116 carries Phosphatidylethanolamine amidated glycine lipidation. A propeptide (removed in mature form) is located at residue lysine 117.

This sequence belongs to the ATG8 family. Interacts with GABRG2 and beta-tubulin. In terms of processing, the precursor molecule is cleaved by ATG4B to form the cytosolic form, GABARAPL3-I. This is activated by APG7L/ATG7, transferred to ATG3 and conjugated to phospholipid to form the membrane-bound form, GABARAPL3-II. ATG4B also mediates the delipidation required for GABARAPL1 recycling when autophagosomes fuse with lysosomes. Ubiquitous. Expressed at very high levels in the brain, heart, peripheral blood leukocytes, liver, kidney, placenta and skeletal muscle. Expressed at very low levels in thymus and small intestine.

The protein resides in the cytoplasm. The protein localises to the cytoskeleton. It is found in the cytoplasmic vesicle. It localises to the autophagosome membrane. Ubiquitin-like modifier involved in autophagosome formation. Whereas LC3s are involved in elongation of the phagophore membrane, the GABARAP/GATE-16 subfamily is essential for a later stage in autophagosome maturation. This is Gamma-aminobutyric acid receptor-associated protein-like 3 (GABARAPL3) from Homo sapiens (Human).